Consider the following 393-residue polypeptide: Acetylornithine aminotransferase 1 (393 aa).

Residue Arg-131 coordinates N(2)-acetyl-L-ornithine. Position 215–218 (215–218 (DEVQ)) interacts with pyridoxal 5'-phosphate. Lys-244 carries the N6-(pyridoxal phosphate)lysine modification. Thr-272 contributes to the N(2)-acetyl-L-ornithine binding site. Thr-273 is a binding site for pyridoxal 5'-phosphate.

It belongs to the class-III pyridoxal-phosphate-dependent aminotransferase family. ArgD subfamily. Homodimer. Requires pyridoxal 5'-phosphate as cofactor.

The protein localises to the cytoplasm. It carries out the reaction N(2)-acetyl-L-ornithine + 2-oxoglutarate = N-acetyl-L-glutamate 5-semialdehyde + L-glutamate. It functions in the pathway amino-acid biosynthesis; L-arginine biosynthesis; N(2)-acetyl-L-ornithine from L-glutamate: step 4/4. The polypeptide is Acetylornithine aminotransferase 1 (Bordetella bronchiseptica (strain ATCC BAA-588 / NCTC 13252 / RB50) (Alcaligenes bronchisepticus)).